The primary structure comprises 505 residues: Flagellin (505 aa).

The protein belongs to the bacterial flagellin family.

It localises to the secreted. It is found in the bacterial flagellum. Flagellin is the subunit protein which polymerizes to form the filaments of bacterial flagella. This chain is Flagellin (fliC), found in Salmonella rostock.